Consider the following 139-residue polypeptide: Chemical-damaging agent resistance protein B (139 aa).

This sequence belongs to the CAPAB/TerDEXZ family.

Its function is as follows. Not known; could confer methyl methane sulfonate (MMS), mitomycin C (MC), and UV resistance. The chain is Chemical-damaging agent resistance protein B from Clostridium acetobutylicum.